Reading from the N-terminus, the 130-residue chain is Nascent polypeptide-associated complex protein (130 aa).

The 69-residue stretch at 6–74 folds into the NAC-A/B domain; sequence GMNPRKMQQM…PVERDAADAI (69 aa). The interval 65 to 91 is disordered; the sequence is PVERDAADAIEAAPADDSDDTDDDDAI. Over residues 78–90 the composition is skewed to acidic residues; it reads PADDSDDTDDDDA.

The protein belongs to the NAC-alpha family. Homodimer. Interacts with the ribosome. Binds ribosomal RNA.

In terms of biological role, contacts the emerging nascent chain on the ribosome. The protein is Nascent polypeptide-associated complex protein of Halobacterium salinarum (strain ATCC 700922 / JCM 11081 / NRC-1) (Halobacterium halobium).